The chain runs to 361 residues: Chorismate synthase (361 aa).

The NADP(+) site is built by arginine 48 and arginine 54. FMN contacts are provided by residues arginine 125–serine 127, asparagine 238–alanine 239, glycine 278, lysine 293–serine 297, and arginine 319.

The protein belongs to the chorismate synthase family. In terms of assembly, homotetramer. It depends on FMNH2 as a cofactor.

It catalyses the reaction 5-O-(1-carboxyvinyl)-3-phosphoshikimate = chorismate + phosphate. It functions in the pathway metabolic intermediate biosynthesis; chorismate biosynthesis; chorismate from D-erythrose 4-phosphate and phosphoenolpyruvate: step 7/7. Its function is as follows. Catalyzes the anti-1,4-elimination of the C-3 phosphate and the C-6 proR hydrogen from 5-enolpyruvylshikimate-3-phosphate (EPSP) to yield chorismate, which is the branch point compound that serves as the starting substrate for the three terminal pathways of aromatic amino acid biosynthesis. This reaction introduces a second double bond into the aromatic ring system. The sequence is that of Chorismate synthase from Klebsiella pneumoniae (strain 342).